Here is a 272-residue protein sequence, read N- to C-terminus: Prephenate dehydratase (272 aa).

Positions 4–179 (AVIYTLPKGT…NKTRFILIGK (176 aa)) constitute a Prephenate dehydratase domain. An ACT domain is found at 194–269 (IVFELKEDKP…TFINLLGKYP (76 aa)).

As to quaternary structure, homodimer.

It carries out the reaction prephenate + H(+) = 3-phenylpyruvate + CO2 + H2O. It participates in amino-acid biosynthesis; L-phenylalanine biosynthesis; phenylpyruvate from prephenate: step 1/1. Inhibited by L-phenylalanine but not by L-tyrosine or L-tryptophan. This chain is Prephenate dehydratase (pheA), found in Methanocaldococcus jannaschii (strain ATCC 43067 / DSM 2661 / JAL-1 / JCM 10045 / NBRC 100440) (Methanococcus jannaschii).